We begin with the raw amino-acid sequence, 265 residues long: Urease accessory protein UreH (265 aa).

This sequence belongs to the UreD family. UreH, UreF and UreG form a complex that acts as a GTP-hydrolysis-dependent molecular chaperone, activating the urease apoprotein by helping to assemble the nickel containing metallocenter of UreC. The UreE protein probably delivers the nickel.

The protein resides in the cytoplasm. In terms of biological role, required for maturation of urease via the functional incorporation of the urease nickel metallocenter. The polypeptide is Urease accessory protein UreH (Helicobacter pylori (strain G27)).